We begin with the raw amino-acid sequence, 179 residues long: ATP synthase subunit delta (179 aa).

It belongs to the ATPase delta chain family. In terms of assembly, F-type ATPases have 2 components, F(1) - the catalytic core - and F(0) - the membrane proton channel. F(1) has five subunits: alpha(3), beta(3), gamma(1), delta(1), epsilon(1). F(0) has three main subunits: a(1), b(2) and c(10-14). The alpha and beta chains form an alternating ring which encloses part of the gamma chain. F(1) is attached to F(0) by a central stalk formed by the gamma and epsilon chains, while a peripheral stalk is formed by the delta and b chains.

Its subcellular location is the cell inner membrane. Its function is as follows. F(1)F(0) ATP synthase produces ATP from ADP in the presence of a proton or sodium gradient. F-type ATPases consist of two structural domains, F(1) containing the extramembraneous catalytic core and F(0) containing the membrane proton channel, linked together by a central stalk and a peripheral stalk. During catalysis, ATP synthesis in the catalytic domain of F(1) is coupled via a rotary mechanism of the central stalk subunits to proton translocation. Functionally, this protein is part of the stalk that links CF(0) to CF(1). It either transmits conformational changes from CF(0) to CF(1) or is implicated in proton conduction. This Thermosipho melanesiensis (strain DSM 12029 / CIP 104789 / BI429) protein is ATP synthase subunit delta.